Here is a 141-residue protein sequence, read N- to C-terminus: Transcription antitermination protein NusB (141 aa).

Belongs to the NusB family.

Involved in transcription antitermination. Required for transcription of ribosomal RNA (rRNA) genes. Binds specifically to the boxA antiterminator sequence of the ribosomal RNA (rrn) operons. The sequence is that of Transcription antitermination protein NusB from Desulfotalea psychrophila (strain LSv54 / DSM 12343).